We begin with the raw amino-acid sequence, 342 residues long: Uroporphyrinogen decarboxylase (342 aa).

Substrate-binding positions include 22 to 26, phenylalanine 42, aspartate 72, tyrosine 146, serine 201, and histidine 317; that span reads RQAGR.

This sequence belongs to the uroporphyrinogen decarboxylase family. As to quaternary structure, homodimer.

The protein localises to the cytoplasm. It catalyses the reaction uroporphyrinogen III + 4 H(+) = coproporphyrinogen III + 4 CO2. It functions in the pathway porphyrin-containing compound metabolism; protoporphyrin-IX biosynthesis; coproporphyrinogen-III from 5-aminolevulinate: step 4/4. Catalyzes the decarboxylation of four acetate groups of uroporphyrinogen-III to yield coproporphyrinogen-III. This Orientia tsutsugamushi (strain Ikeda) (Rickettsia tsutsugamushi) protein is Uroporphyrinogen decarboxylase.